A 519-amino-acid polypeptide reads, in one-letter code: tRNA-2-methylthio-N(6)-dimethylallyladenosine synthase (519 aa).

The interval 1–23 (MNEQQRKQQSQIRTEQANVDRIK) is disordered. Residues 7–17 (KQQSQIRTEQA) show a composition bias toward polar residues. The region spanning 76–194 (KKFLIRTYGC…LPHLVKEALF (119 aa)) is the MTTase N-terminal domain. [4Fe-4S] cluster-binding residues include Cys-85, Cys-121, Cys-155, Cys-231, Cys-235, and Cys-238. One can recognise a Radical SAM core domain in the interval 217 to 450 (RKGKIKAWVN…VNKQSAASMK (234 aa)). One can recognise a TRAM domain in the interval 450 to 513 (KDYAGKKVKV…TWSLNGVMVE (64 aa)).

The protein belongs to the methylthiotransferase family. MiaB subfamily. Monomer. Requires [4Fe-4S] cluster as cofactor.

The protein localises to the cytoplasm. The catalysed reaction is N(6)-dimethylallyladenosine(37) in tRNA + (sulfur carrier)-SH + AH2 + 2 S-adenosyl-L-methionine = 2-methylsulfanyl-N(6)-dimethylallyladenosine(37) in tRNA + (sulfur carrier)-H + 5'-deoxyadenosine + L-methionine + A + S-adenosyl-L-homocysteine + 2 H(+). Its function is as follows. Catalyzes the methylthiolation of N6-(dimethylallyl)adenosine (i(6)A), leading to the formation of 2-methylthio-N6-(dimethylallyl)adenosine (ms(2)i(6)A) at position 37 in tRNAs that read codons beginning with uridine. The sequence is that of tRNA-2-methylthio-N(6)-dimethylallyladenosine synthase from Oceanobacillus iheyensis (strain DSM 14371 / CIP 107618 / JCM 11309 / KCTC 3954 / HTE831).